Consider the following 311-residue polypeptide: Putative protease MJ0651 (311 aa).

Residue Ser128 is the Nucleophile of the active site. Residue Lys180 is the Proton donor/acceptor of the active site.

Belongs to the peptidase S49 family.

The polypeptide is Putative protease MJ0651 (Methanocaldococcus jannaschii (strain ATCC 43067 / DSM 2661 / JAL-1 / JCM 10045 / NBRC 100440) (Methanococcus jannaschii)).